Consider the following 205-residue polypeptide: Heme-binding protein 2 (205 aa).

Positions 1-37 are disordered; the sequence is MAEEPEPDLGVAEGSEDQALEMPSWKAPEDIDPQPGS. Ala2 carries the N-acetylalanine modification. Ser181 carries the phosphoserine modification.

This sequence belongs to the HEBP family. Monomer. Interacts with LRPPRC. May interact with BCL2L1; an interaction with BCL2L1 was observed using a peptide, but not with the full-length protein. The full-length protein would have to undergo a major conformation change for the interaction to occur. Interacts with PDCD6.

The protein resides in the cytoplasm. The protein localises to the mitochondrion. Its function is as follows. Can promote mitochondrial permeability transition and facilitate necrotic cell death under different types of stress conditions. May have low affinity for heme. This is Heme-binding protein 2 (Hebp2) from Mus musculus (Mouse).